Consider the following 172-residue polypeptide: Translation initiation factor IF-3 (172 aa).

The protein belongs to the IF-3 family. Monomer.

Its subcellular location is the cytoplasm. Its function is as follows. IF-3 binds to the 30S ribosomal subunit and shifts the equilibrium between 70S ribosomes and their 50S and 30S subunits in favor of the free subunits, thus enhancing the availability of 30S subunits on which protein synthesis initiation begins. The chain is Translation initiation factor IF-3 from Bartonella henselae (strain ATCC 49882 / DSM 28221 / CCUG 30454 / Houston 1) (Rochalimaea henselae).